The following is a 707-amino-acid chain: DNA topoisomerase 1 (707 aa).

One can recognise a Toprim domain in the interval 1–140; the sequence is MYAILAEKPS…IKRLWTSSMT (140 aa). The Topo IA-type catalytic domain occupies 157 to 596; it reads TLPLYYQAKA…HSKKLSSVLF (440 aa). The tract at residues 199–204 is interaction with DNA; it reads SLGRVQ. Tyrosine 323 (O-(5'-phospho-DNA)-tyrosine intermediate) is an active-site residue.

This sequence belongs to the type IA topoisomerase family. Monomer.

The enzyme catalyses ATP-independent breakage of single-stranded DNA, followed by passage and rejoining.. Functionally, releases the supercoiling and torsional tension of DNA, which is introduced during the DNA replication and transcription, by transiently cleaving and rejoining one strand of the DNA duplex. Introduces a single-strand break via transesterification at a target site in duplex DNA. The scissile phosphodiester is attacked by the catalytic tyrosine of the enzyme, resulting in the formation of a DNA-(5'-phosphotyrosyl)-enzyme intermediate and the expulsion of a 3'-OH DNA strand. The free DNA strand then undergoes passage around the unbroken strand, thus removing DNA supercoils. Finally, in the religation step, the DNA 3'-OH attacks the covalent intermediate to expel the active-site tyrosine and restore the DNA phosphodiester backbone. The polypeptide is DNA topoisomerase 1 (topA) (Alkalihalophilus pseudofirmus (strain ATCC BAA-2126 / JCM 17055 / OF4) (Bacillus pseudofirmus)).